The following is a 391-amino-acid chain: Nutrient and stress factor 1 (391 aa).

Residues 1-27 (MENTTNRNTAGVLTSSNGNFATNSVAA) show a composition bias toward polar residues. The tract at residues 1-37 (MENTTNRNTAGVLTSSNGNFATNSVAASTPKRSKSAR) is disordered. 2 consecutive C2H2-type zinc fingers follow at residues 41-66 (FKCTGYDGCTMSFTRAEHLARHIRKH) and 72-95 (FQCPACLKFFSRVDNLKQHRESVH). A disordered region spans residues 91 to 149 (RESVHAHKNHHSTSSHQRKPSSSSLSSSSSASSSSSASSSTSYSDPYRKTNINSGNMPM). The span at 96-109 (AHKNHHSTSSHQRK) shows a compositional bias: basic residues. The segment covering 110–134 (PSSSSLSSSSSASSSSSASSSTSYS) has biased composition (low complexity). 2 positions are modified to phosphoserine: Ser-162 and Ser-163. The interval 326–374 (AFSQPPNGNKNNNMSSSKNGGKGGENFKNTDDRNDNNNKKRSETLSESD) is disordered. Over residues 332-344 (NGNKNNNMSSSKN) the composition is skewed to low complexity. Over residues 353 to 369 (KNTDDRNDNNNKKRSET) the composition is skewed to basic and acidic residues.

The protein resides in the nucleus. In terms of biological role, transcription factor that participates in the transcriptional activation of glucose-repressed genes during exponential growth in non-fermentable carbon conditions. Also involved in salt-stress response. The sequence is that of Nutrient and stress factor 1 (USV1) from Saccharomyces cerevisiae (strain ATCC 204508 / S288c) (Baker's yeast).